The primary structure comprises 368 residues: MTAIIELNNLSVQFHQKGRLVTAVKNATLHIEKGDIYGVIGYSGAGKSTLVRTINLLQKPTEGQIVINGEKIFDSENPVKFTGAKLREFRQKIGMIFQHFNLLSEKTVFNNVAFALQHSQIEDKNGKKRYLTKKEKNDKVTELLKLVDLADLSDKYPAQLSGGQKQRVAIARALANDPEILISDEGTSALDPKTTNQILDLLKSLHEKLGITVVLITHEMQVVKEIANKVAVMQNGEIIEQNSLIDIFAQPKEALTKQFIETTSSVNRFIASLSKTELLAQLADDEELIHLDYSGSELEDPVVSDITKKFDVTTNIFYGNVELLQGQPFGSLVLTLKGSSEHRAAAKAYFVERHLKFEVLGKIERTVD.

Positions 5–260 (IELNNLSVQF…PKEALTKQFI (256 aa)) constitute an ABC transporter domain. Residue 41–48 (GYSGAGKS) participates in ATP binding.

Belongs to the ABC transporter superfamily. Methionine importer (TC 3.A.1.24) family. In terms of assembly, the complex is composed of two ATP-binding proteins (MetN), two transmembrane proteins (MetI) and a solute-binding protein (MetQ).

Its subcellular location is the cell membrane. The enzyme catalyses L-methionine(out) + ATP + H2O = L-methionine(in) + ADP + phosphate + H(+). It catalyses the reaction D-methionine(out) + ATP + H2O = D-methionine(in) + ADP + phosphate + H(+). Its function is as follows. Part of the ABC transporter complex MetNIQ involved in methionine import. Responsible for energy coupling to the transport system. The sequence is that of Methionine import ATP-binding protein MetN from Lactococcus lactis subsp. cremoris (strain MG1363).